Consider the following 331-residue polypeptide: MSEIQSLTERALADVAAAQTPDQLEALRVALLGKSGSITAQLKQLGTLPADQRKAAGEAINLLRDALTAALAERKNTLETAALDARLAGERIDVTLPGRRSERGGLHPVTRTLERIVEIFARLGYELSDGPEIEDDWHNFEALNFPPHHPARAMHDTFYFGDGRLLRTHTSGVQVRYMDAHKPPLHMIAAGKVYRSDSDQTHSPMFHQLEGLLVDEHSTFADLKGTLSEFVRAFFERDFEMRFRPSYFPFVEPGAEVDIAWQQPDGSTRWLEVLGCGMVHPNVLRNVGIDPERYTGFAFGLGVERFAMLRYGVNDLRAFFENDVRFLRQFA.

Glutamate 252 is a binding site for Mg(2+).

It belongs to the class-II aminoacyl-tRNA synthetase family. Phe-tRNA synthetase alpha subunit type 1 subfamily. In terms of assembly, tetramer of two alpha and two beta subunits. Mg(2+) is required as a cofactor.

It localises to the cytoplasm. It catalyses the reaction tRNA(Phe) + L-phenylalanine + ATP = L-phenylalanyl-tRNA(Phe) + AMP + diphosphate + H(+). This chain is Phenylalanine--tRNA ligase alpha subunit, found in Xanthomonas oryzae pv. oryzae (strain MAFF 311018).